A 208-amino-acid chain; its full sequence is Small ribosomal subunit protein uS4 (208 aa).

In terms of domain architecture, S4 RNA-binding spans 98–161 (QRLDNVVYRM…KTNPQIVRAI (64 aa)).

Belongs to the universal ribosomal protein uS4 family. Part of the 30S ribosomal subunit. Contacts protein S5. The interaction surface between S4 and S5 is involved in control of translational fidelity.

One of the primary rRNA binding proteins, it binds directly to 16S rRNA where it nucleates assembly of the body of the 30S subunit. Functionally, with S5 and S12 plays an important role in translational accuracy. The polypeptide is Small ribosomal subunit protein uS4 (Campylobacter fetus subsp. fetus (strain 82-40)).